The sequence spans 161 residues: MDTPKMGDLYQRIANQINEMIPSEWENVYLYAEILDDSSEVYFYFNIPGKNEFLYSHNIPEHFNVSEDIYDDLLIELQESFEELREEYEKNNPETWTNLTLKLDRTGQFSIDYNYEDVIASELNGSQRKAVWVYKNLGLMPKRKTVRDFLEDYIKTNEGKI.

In terms of assembly, monomer. Interacts with the C-terminus of cognate toxin YeeF, probably with 2:2 stoichiometry. The second YezG molecules binds with lower affinity.

The protein resides in the cytoplasm. In terms of biological role, immunity component of an LXG toxin-immunity module. These modules promote kin selection, mediate competition in biofilms, and drive spatial segregation of different strains, indicating that LXG toxins may help avoid warfare between strains in biofilms. Neutralizes the toxic abilities of cognate toxin YeeF upon expression in E.coli and in vitro. In Bacillus spizizenii (strain ATCC 23059 / NRRL B-14472 / W23) (Bacillus subtilis subsp. spizizenii), this protein is Immunity protein YezG.